We begin with the raw amino-acid sequence, 378 residues long: MQAFLVILFMVVVGAVIGGVTNVIAIRMLFHPFKPYYIFKMRIPFTPGLIPKRREEIATKIGQVIEEHLITESVILQKLNEPNTREAINDLVIKQLSKLKSDDATIRKFANQFDFDLDLDDLINNKLDKTIINKLNNYYYDKQATSINEILPADVITMVDEKLDQAGDLIRERARNYLSSDKGARDIYDMLDTFFAEKGKIVGLLQMFMTKESIAERVQHELIRLTRHPKAKVIIDKVIRDEYETLKSQPLSHVVKEEQFTNISESLVHLVITNLQLNEKMDTPISKLTPKLVDQIQVGVANTITDLIIKQASNHLSTIMTKINLRQMVENQINTFDLDYIERLIIEIANKELKLIMSLGFILGGIIGFFQGIVAIFV.

The next 2 helical transmembrane spans lie at 4-24 and 358-378; these read FLVI…TNVI and SLGF…AIFV.

The protein belongs to the UPF0754 family.

Its subcellular location is the cell membrane. The protein is UPF0754 membrane protein SH1116 of Staphylococcus haemolyticus (strain JCSC1435).